The primary structure comprises 399 residues: Probable aspartate/prephenate aminotransferase (399 aa).

L-aspartate contacts are provided by G39, W125, and N175. At K239 the chain carries N6-(pyridoxal phosphate)lysine. R375 is a binding site for L-aspartate.

The protein belongs to the class-I pyridoxal-phosphate-dependent aminotransferase family. As to quaternary structure, homodimer. Pyridoxal 5'-phosphate serves as cofactor.

It localises to the cytoplasm. It carries out the reaction L-aspartate + 2-oxoglutarate = oxaloacetate + L-glutamate. The enzyme catalyses L-arogenate + 2-oxoglutarate = prephenate + L-glutamate. Catalyzes the reversible conversion of aspartate and 2-oxoglutarate to glutamate and oxaloacetate. Can also transaminate prephenate in the presence of glutamate. The protein is Probable aspartate/prephenate aminotransferase (aatA) of Rickettsia typhi (strain ATCC VR-144 / Wilmington).